Reading from the N-terminus, the 425-residue chain is High-affinity branched-chain amino acid transport system permease protein LivM (425 aa).

11 helical membrane passes run 6–26 (IAMALLSAAMFFVLAGVFMGV), 45–65 (WQWVFIGTAVVFFFQLLRPAF), 92–112 (FLVALLVLAVAWPFMVSRGTV), 120–140 (IYIILGLGLNVVVGLSGLLVL), 145–165 (FYAIGAYTFALLNHYYGLGFW), 167–187 (CLPIAGLMAAAAGFLLGFPVL), 191–211 (GDYLAIVTLGFGEIVRILLLN), 260–280 (RVIFLYLVALLLVVLSLFVIN), 311–331 (IKLTAFTISAAFAGFAGTLFA), 353–373 (IVVLGGMGSQFAVILAAILLV), and 387–407 (MLMLGGLMVLMMIWRPQGLLP).

This sequence belongs to the binding-protein-dependent transport system permease family. LivHM subfamily.

It is found in the cell inner membrane. In terms of biological role, part of the binding-protein-dependent transport system for branched-chain amino acids. Probably responsible for the translocation of the substrates across the membrane. The polypeptide is High-affinity branched-chain amino acid transport system permease protein LivM (livM) (Escherichia coli (strain K12)).